The sequence spans 241 residues: Biosynthetic peptidoglycan transglycosylase (241 aa).

A helical transmembrane segment spans residues 19–39 (AILAVLGVWIAGILLFSVMPV).

Belongs to the glycosyltransferase 51 family.

It is found in the cell inner membrane. The enzyme catalyses [GlcNAc-(1-&gt;4)-Mur2Ac(oyl-L-Ala-gamma-D-Glu-L-Lys-D-Ala-D-Ala)](n)-di-trans,octa-cis-undecaprenyl diphosphate + beta-D-GlcNAc-(1-&gt;4)-Mur2Ac(oyl-L-Ala-gamma-D-Glu-L-Lys-D-Ala-D-Ala)-di-trans,octa-cis-undecaprenyl diphosphate = [GlcNAc-(1-&gt;4)-Mur2Ac(oyl-L-Ala-gamma-D-Glu-L-Lys-D-Ala-D-Ala)](n+1)-di-trans,octa-cis-undecaprenyl diphosphate + di-trans,octa-cis-undecaprenyl diphosphate + H(+). Its pathway is cell wall biogenesis; peptidoglycan biosynthesis. Its function is as follows. Peptidoglycan polymerase that catalyzes glycan chain elongation from lipid-linked precursors. This chain is Biosynthetic peptidoglycan transglycosylase, found in Cronobacter sakazakii (strain ATCC BAA-894) (Enterobacter sakazakii).